A 505-amino-acid polypeptide reads, in one-letter code: Protein disulfide-isomerase A3 (505 aa).

An N-terminal signal peptide occupies residues Met1 to Ala24. The Thioredoxin 1 domain occupies Ser25–Gly133. Residues Cys57 and Cys60 each act as nucleophile in the active site. A disulfide bond links Cys57 and Cys60. Lys61 is modified (N6-methyllysine). Cys85 and Cys92 are joined by a disulfide. An N6-succinyllysine modification is found at Lys129. An N6-acetyllysine modification is found at Lys152. Lys218 is subject to N6-succinyllysine. Lys252 carries the N6-acetyllysine modification. At Thr319 the chain carries Phosphothreonine. Residues Ser343–Thr485 enclose the Thioredoxin 2 domain. Lys362 is subject to N6-acetyllysine. Catalysis depends on nucleophile residues Cys406 and Cys409. A disulfide bridge connects residues Cys406 and Cys409. The disordered stretch occupies residues Ala484–Leu505. Over residues Gln491 to Leu505 the composition is skewed to basic and acidic residues. N6-acetyllysine is present on Lys494. Residues Gln502 to Leu505 carry the Prevents secretion from ER motif.

The protein belongs to the protein disulfide isomerase family. As to quaternary structure, part of the major histocompatibility complex class I (MHC I) peptide loading complex composed of TAP1, TAP2, B2M, MHC heavy chain, TAPBP, PDIA3, and CALR. Interacts with ERP27 and CANX. Interacts with SERPINA2 and with SERPINA1. Interacts with ATP2A2. In terms of processing, within the major histocompatibility complex class I (MHC I) peptide loading complex forms reversible disulfide-linked heterodimers with TAPBP as part of its protein folding chaperone activity. This is essential to assist the dynamic assembly of the MHC I complex with high affinity antigens in the endoplasmic reticulum. Post-translationally, phosphorylated. As to expression, in caput epididymal spermatozoa, detected in the head, mid and principal pieces. In cauda epididymal spermatozoa detected only in the acrosome (at protein level).

Its subcellular location is the endoplasmic reticulum. It localises to the endoplasmic reticulum lumen. The protein resides in the melanosome. It carries out the reaction Catalyzes the rearrangement of -S-S- bonds in proteins.. With respect to regulation, seems to be inhibited by acidic phospholipids. In terms of biological role, protein disulfide isomerase that catalyzes the formation, isomerization, and reduction or oxidation of disulfide bonds in client proteins and functions as a protein folding chaperone. Core component of the major histocompatibility complex class I (MHC I) peptide loading complex where it functions as an essential folding chaperone for TAPBP. Through TAPBP, assists the dynamic assembly of the MHC I complex with high affinity antigens in the endoplasmic reticulum. Therefore, plays a crucial role in the presentation of antigens to cytotoxic T cells in adaptive immunity. This Rattus norvegicus (Rat) protein is Protein disulfide-isomerase A3 (Pdia3).